Here is a 459-residue protein sequence, read N- to C-terminus: Glycosyl hydrolase family 109 protein 1 (459 aa).

The segment at residues 1–31 (MHNIHRRHFLKAAGAVTAGLVTANIALNANA) is a signal peptide (tat-type signal). Residues 64–65 (ER), D86, 135–138 (WEWH), 155–156 (EV), and N184 each bind NAD(+). Substrate is bound by residues Y213, R232, 244–247 (YPTH), and Y326. Residue Y244 coordinates NAD(+).

The protein belongs to the Gfo/Idh/MocA family. Glycosyl hydrolase 109 subfamily. Requires NAD(+) as cofactor. In terms of processing, predicted to be exported by the Tat system. The position of the signal peptide cleavage has not been experimentally proven.

Glycosidase. The chain is Glycosyl hydrolase family 109 protein 1 from Shewanella sp. (strain ANA-3).